The primary structure comprises 288 residues: uncharacterized protein (288 aa).

NAD(+)-binding positions include 6–20 (GFIG…MASH) and T97. K172 is a catalytic residue. K240 lines the NAD(+) pocket.

It belongs to the HIBADH-related family.

It is found in the cell membrane. The protein resides in the membrane raft. This is an uncharacterized protein from Bacillus subtilis (strain 168).